A 496-amino-acid polypeptide reads, in one-letter code: Anaerobic nitric oxide reductase flavorubredoxin (496 aa).

Residues 30–210 (TKGTSYNSYL…PFSALVTAKI (181 aa)) are zinc metallo-hydrolase. Histidine 79, glutamate 81, aspartate 83, histidine 147, aspartate 166, and histidine 227 together coordinate Fe cation. The 140-residue stretch at 254 to 393 (ITIFYDSMSN…LCREHGQFIA (140 aa)) folds into the Flavodoxin-like domain. FMN is bound by residues 260-264 (SMSNN) and 342-369 (AFGSYGWNGGAVDRIHSRLTDAGFETAV). Positions 444-495 (KQCMLCSVCNWVYDPEIGEPNQGVEPNTPWSSVPNDFLCPECHLGKDVFVEI) constitute a Rubredoxin-like domain. The Fe cation site is built by cysteine 449, cysteine 452, cysteine 482, and cysteine 485.

This sequence in the N-terminal section; belongs to the zinc metallo-hydrolase group 3 family. In terms of assembly, homotetramer. The cofactor is Fe cation. FMN serves as cofactor.

The protein localises to the cytoplasm. It functions in the pathway nitrogen metabolism; nitric oxide reduction. In terms of biological role, anaerobic nitric oxide reductase; uses NADH to detoxify nitric oxide (NO), protecting several 4Fe-4S NO-sensitive enzymes. Has at least 2 reductase partners, only one of which (NorW, flavorubredoxin reductase) has been identified. NO probably binds to the di-iron center; electrons enter from the NorW at rubredoxin and are transferred sequentially to the FMN center and the di-iron center. Also able to function as an aerobic oxygen reductase. The sequence is that of Anaerobic nitric oxide reductase flavorubredoxin from Aliivibrio fischeri (strain ATCC 700601 / ES114) (Vibrio fischeri).